A 110-amino-acid chain; its full sequence is Glycine cleavage system H-like protein (110 aa).

The region spanning 10-97 (VEKVGDLYVF…PEENWLFKLD (88 aa)) is the Lipoyl-binding domain. Aspartate 27 is subject to ADP-ribosyl aspartic acid. Lysine 56 carries the post-translational modification N6-lipoyllysine.

As to quaternary structure, lipoylated GcvH-L directly interacts with SAV0325, which reverses the SirTM-mediated mono-ADP-ribosylation of GcvH-L, and with the oxidoreductase SAV0322. Is lipoylated on K-56 by LplA2 (SAV0327) and then mono-ADP-ribosylated, probably on D-27, by SirTM (SAV0326). The mono-ADP-ribosylation state of GcvH-L might regulate the availability of the lipoyl moiety for redox reactions; ADP-ribosylation would inhibit the interaction of the oxidoreductase with GcvH-L when it is not required, thus ADP-ribosylation of GcvH-L might be acting to keep the response 'off' under non-stress conditions.

Its function is as follows. May act as a carrier protein for the ROS scavenging lipoyl moiety and/or as a substrate for oxidoreductases such as SAV0322 and SAV0323. The chain is Glycine cleavage system H-like protein from Staphylococcus aureus (strain Mu50 / ATCC 700699).